We begin with the raw amino-acid sequence, 180 residues long: Large ribosomal subunit protein uL6 (180 aa).

Belongs to the universal ribosomal protein uL6 family. In terms of assembly, part of the 50S ribosomal subunit.

Its function is as follows. This protein binds to the 23S rRNA, and is important in its secondary structure. It is located near the subunit interface in the base of the L7/L12 stalk, and near the tRNA binding site of the peptidyltransferase center. This is Large ribosomal subunit protein uL6 from Thermus aquaticus.